A 131-amino-acid polypeptide reads, in one-letter code: Type 3 secretion system pilotin (131 aa).

The signal sequence occupies residues 1-15; that stretch reads MSRIIALIISFLLVG. A lipid anchor (N-palmitoyl cysteine) is attached at cysteine 16. A lipid anchor (S-diacylglycerol cysteine) is attached at cysteine 16.

The protein belongs to the ExsB/YscW family. In terms of assembly, interacts with YscC/SctC.

The protein resides in the cell outer membrane. Functionally, involved in the synthesis of the type III secretion system (T3SS), also called injectisome, which is used to inject bacterial effector proteins into eukaryotic host cells. Pilot protein that is required for the proper localization of the secretin YscC/SctC in the outer membrane. Also required for efficient oligomerization of YscC/SctC and stabilization of the oligomers. The sequence is that of Type 3 secretion system pilotin from Yersinia enterocolitica.